A 638-amino-acid chain; its full sequence is 1-deoxy-D-xylulose-5-phosphate synthase (638 aa).

Residues H72 and 113 to 115 (GHA) contribute to the thiamine diphosphate site. D144 is a binding site for Mg(2+). Residues 145-146 (GA), N174, Y287, and E370 each bind thiamine diphosphate. N174 contributes to the Mg(2+) binding site.

The protein belongs to the transketolase family. DXPS subfamily. Homodimer. It depends on Mg(2+) as a cofactor. Thiamine diphosphate serves as cofactor.

The enzyme catalyses D-glyceraldehyde 3-phosphate + pyruvate + H(+) = 1-deoxy-D-xylulose 5-phosphate + CO2. The protein operates within metabolic intermediate biosynthesis; 1-deoxy-D-xylulose 5-phosphate biosynthesis; 1-deoxy-D-xylulose 5-phosphate from D-glyceraldehyde 3-phosphate and pyruvate: step 1/1. In terms of biological role, catalyzes the acyloin condensation reaction between C atoms 2 and 3 of pyruvate and glyceraldehyde 3-phosphate to yield 1-deoxy-D-xylulose-5-phosphate (DXP). The chain is 1-deoxy-D-xylulose-5-phosphate synthase from Picosynechococcus sp. (strain ATCC 27264 / PCC 7002 / PR-6) (Agmenellum quadruplicatum).